The following is a 447-amino-acid chain: Phosphoglucosamine mutase (447 aa).

S101 acts as the Phosphoserine intermediate in catalysis. Mg(2+)-binding residues include S101, D242, D244, and D246. Residue S101 is modified to Phosphoserine.

The protein belongs to the phosphohexose mutase family. Requires Mg(2+) as cofactor. In terms of processing, activated by phosphorylation.

The enzyme catalyses alpha-D-glucosamine 1-phosphate = D-glucosamine 6-phosphate. In terms of biological role, catalyzes the conversion of glucosamine-6-phosphate to glucosamine-1-phosphate. In Bradyrhizobium diazoefficiens (strain JCM 10833 / BCRC 13528 / IAM 13628 / NBRC 14792 / USDA 110), this protein is Phosphoglucosamine mutase.